The sequence spans 216 residues: Probable nicotinate-nucleotide adenylyltransferase (216 aa).

This sequence belongs to the NadD family.

It carries out the reaction nicotinate beta-D-ribonucleotide + ATP + H(+) = deamido-NAD(+) + diphosphate. The protein operates within cofactor biosynthesis; NAD(+) biosynthesis; deamido-NAD(+) from nicotinate D-ribonucleotide: step 1/1. Catalyzes the reversible adenylation of nicotinate mononucleotide (NaMN) to nicotinic acid adenine dinucleotide (NaAD). The sequence is that of Probable nicotinate-nucleotide adenylyltransferase from Shewanella pealeana (strain ATCC 700345 / ANG-SQ1).